Consider the following 426-residue polypeptide: 3-phosphoshikimate 1-carboxyvinyltransferase (426 aa).

3-phosphoshikimate is bound by residues Lys-22, Ser-23, and Arg-27. Position 22 (Lys-22) interacts with phosphoenolpyruvate. Positions 96 and 124 each coordinate phosphoenolpyruvate. 3-phosphoshikimate is bound by residues Ser-170, Ser-171, Gln-172, Ser-198, Asp-314, Asn-337, and Lys-341. A phosphoenolpyruvate-binding site is contributed by Gln-172. Residue Asp-314 is the Proton acceptor of the active site. Positions 345, 387, and 412 each coordinate phosphoenolpyruvate.

The protein belongs to the EPSP synthase family. Monomer.

The protein resides in the cytoplasm. It catalyses the reaction 3-phosphoshikimate + phosphoenolpyruvate = 5-O-(1-carboxyvinyl)-3-phosphoshikimate + phosphate. Its pathway is metabolic intermediate biosynthesis; chorismate biosynthesis; chorismate from D-erythrose 4-phosphate and phosphoenolpyruvate: step 6/7. Catalyzes the transfer of the enolpyruvyl moiety of phosphoenolpyruvate (PEP) to the 5-hydroxyl of shikimate-3-phosphate (S3P) to produce enolpyruvyl shikimate-3-phosphate and inorganic phosphate. This is 3-phosphoshikimate 1-carboxyvinyltransferase from Shewanella sediminis (strain HAW-EB3).